The sequence spans 242 residues: Small ribosomal subunit protein uS2 (242 aa).

Belongs to the universal ribosomal protein uS2 family.

This chain is Small ribosomal subunit protein uS2, found in Aliivibrio fischeri (strain ATCC 700601 / ES114) (Vibrio fischeri).